The chain runs to 378 residues: Stimulator of interferon genes protein (378 aa).

2 consecutive transmembrane segments (helical) span residues 21 to 41 (AAFV…EPAD) and 46 to 66 (WLVL…LCSL). S-palmitoyl cysteine attachment occurs at residues Cys88 and Cys91. Transmembrane regions (helical) follow at residues 89–109 (LGCP…YTFL) and 114–134 (GLPF…NILL). The tract at residues 153-339 (FNVAHGLAWS…KHLKQEEKEE (187 aa)) is cyclic dinucleotide-binding domain (CBD). Residues Ser162, Tyr167, Arg238, and Thr263 each contribute to the 2',3'-cGAMP site. Residues Ser162, Tyr167, 238–241 (RVYT), and Thr263 each bind 3',3'-c-di-GMP. Residues Tyr167, Arg238, and Thr263 each contribute to the 2',3'-cUAMP site. A C-terminal tail (CTT) region spans residues 339-378 (EVTVGTMGSSGVLESSTLDKEPQLLISGMDQPLPLRTDVF). Ser354 bears the Phosphoserine mark. Thr355 carries the phosphothreonine modification. A pLxIS motif motif is present at residues 362-365 (LLIS). Ser365 carries the phosphoserine; by TBK1 modification.

This sequence belongs to the STING family. In terms of assembly, homodimer; forms a homodimer in absence of cyclic nucleotide (c-di-GMP or cGAMP). Homotetramer; in presence of cyclic nucleotide (c-di-GMP or cGAMP), forms tetramers and higher-order oligomers through side-by-side packing. Interacts (when phosphorylated) with IRF3; following activation and phosphorylation on the pLxIS motif by TBK1, recruits IRF3. Interacts with TBK1; when homodimer, leading to subsequent production of IFN-beta. Post-translationally, phosphorylation by TBK1 leads to activation and production of IFN-beta. Following cyclic nucleotide (c-di-GMP or cGAMP)-binding, activation and translocation from the endoplasmic reticulum, STING1 is phosphorylated by TBK1 at Ser-365 in the pLxIS motif. The phosphorylated pLxIS motif constitutes an IRF3-binding motif, leading to recruitment of the transcription factor IRF3 to induce type-I interferons and other cytokines. In contrast, lacks phosphorylation site at position 357, leading to reduced production of type-I interferons and other cytokines.

It is found in the endoplasmic reticulum membrane. It localises to the cytoplasm. The protein resides in the perinuclear region. Its subcellular location is the endoplasmic reticulum-Golgi intermediate compartment membrane. The protein localises to the golgi apparatus membrane. It is found in the cytoplasmic vesicle. It localises to the autophagosome membrane. The protein resides in the mitochondrion outer membrane. Its subcellular location is the cell membrane. The enzyme catalyses H(+)(in) = H(+)(out). Facilitator of innate immune signaling that acts as a sensor of cytosolic DNA from bacteria and viruses and promotes low production of type I interferon (IFN-alpha and IFN-beta). Compared to other mammals, STING1-dependent type I interferon induction is strongly reduced in bats, suggesting that the cGAS-STING pathway promotes a limited inflammatory response. Innate immune response is triggered in response to non-CpG double-stranded DNA from viruses and bacteria delivered to the cytoplasm. Acts by binding cyclic dinucleotides: recognizes and binds cyclic di-GMP (c-di-GMP), a second messenger produced by bacteria, cyclic UMP-AMP (2',3'-cUAMP), and cyclic GMP-AMP (cGAMP), a messenger produced by CGAS in response to DNA virus in the cytosol. Upon binding to c-di-GMP, cUAMP or cGAMP, STING1 oligomerizes, translocates from the endoplasmic reticulum and is phosphorylated by TBK1 on the pLxIS motif, leading to recruitment and subsequent activation of the transcription factor IRF3 to induce expression of type I interferon and exert a potent anti-viral state. In addition to promote the production of type I interferons, plays a direct role in autophagy. Following cGAMP-binding, STING1 buds from the endoplasmic reticulum into COPII vesicles, which then form the endoplasmic reticulum-Golgi intermediate compartment (ERGIC). The ERGIC serves as the membrane source for WIPI2 recruitment and LC3 lipidation, leading to formation of autophagosomes that target cytosolic DNA or DNA viruses for degradation by the lysosome. Promotes autophagy by acting as a proton channel that directs proton efflux from the Golgi to facilitate MAP1LC3B/LC3B lipidation. The autophagy- and interferon-inducing activities can be uncoupled and autophagy induction is independent of TBK1 phosphorylation. This is Stimulator of interferon genes protein from Rhinolophus ferrumequinum (Greater horseshoe bat).